Here is a 1321-residue protein sequence, read N- to C-terminus: Serine/threonine-protein kinase SIK3 (1321 aa).

The tract at residues 1–59 is disordered; the sequence is MAAAAASGAGGAAGAGTGGAGPAGRLLPPPAPGSPAAPAAVSPAAGQPRPPAPASRGPM. Positions 8 to 22 are enriched in gly residues; that stretch reads GAGGAAGAGTGGAGP. Residues 36–47 show a composition bias toward low complexity; sequence AAPAAVSPAAGQ. One can recognise a Protein kinase domain in the interval 66–317; sequence YEIDRTIGKG…MEQICKHKWM (252 aa). A Phosphothreonine modification is found at T71. Residues 72 to 80 and K95 each bind ATP; that span reads IGKGNFAVV. E113 is subject to Phosphothreonine. D188 (proton acceptor) is an active-site residue. A Phosphothreonine; by LKB1 modification is found at T221. In terms of domain architecture, UBA spans 344-384; the sequence is PLNEDVLLAMEDMGLDKEQTLQSLRSDAYDHYSAIYSLLCD. Residue T469 is modified to Phosphothreonine. Phosphoserine is present on residues S551, S591, and S592. The segment at 585–614 is disordered; that stretch reads TPVDEESSDGEPDQEAVQSSTYKDSNTLHL. Over residues 587-598 the composition is skewed to acidic residues; the sequence is VDEESSDGEPDQ. A compositionally biased stretch (polar residues) spans 600-613; sequence AVQSSTYKDSNTLH. Phosphoserine is present on residues S626 and S647. Residues 727-772 form a disordered region; it reads IQPSSPPPNHPNNHLFRQPSNSPPPMSSAMIQPHGAASSSQFQGLP. A compositionally biased stretch (polar residues) spans 763–772; it reads ASSSQFQGLP. S866 carries the post-translational modification Phosphoserine. Residues 894–945 form a disordered region; sequence LFSDQSRGSPSSYSPSTGVGFSPTQALKVPPLDQFPTFPPSAHQQPPHYTTS. The segment covering 896–909 has biased composition (low complexity); the sequence is SDQSRGSPSSYSPS. The segment covering 935–945 has biased composition (polar residues); sequence AHQQPPHYTTS. S978 carries the post-translational modification Phosphoserine. R986 bears the Omega-N-methylarginine mark. Residues 1256-1265 are compositionally biased toward polar residues; sequence SLMGSQQFQD. The segment at 1256–1289 is disordered; the sequence is SLMGSQQFQDGENEECGASLGGHEHPDLSDGSQH.

Belongs to the protein kinase superfamily. CAMK Ser/Thr protein kinase family. SNF1 subfamily. In terms of assembly, binds to and is activated by YWHAZ when phosphorylated on Thr-221. Interacts with 14-3-3 proteins. Interacts with HDAC4; this interaction leads to HDAC4 retention in the cytoplasm. Interacts with DEPTOR, MLST8/GbetaL, RICTOR and RPTOR. The cofactor is Mg(2+). Post-translationally, phosphorylated at Thr-221 by STK11/LKB1 in complex with STE20-related adapter-alpha (STRADA) pseudo kinase and CAB39. Phosphorylation at Thr-221 is inhibited in response to PTHLH/PTHrP. Phosphorylated at Thr-469 and Ser-551 in response to cAMP signaling. In terms of tissue distribution, expressed in chondrocytes.

It localises to the cytoplasm. The enzyme catalyses L-seryl-[protein] + ATP = O-phospho-L-seryl-[protein] + ADP + H(+). It carries out the reaction L-threonyl-[protein] + ATP = O-phospho-L-threonyl-[protein] + ADP + H(+). With respect to regulation, activated by phosphorylation on Thr-221. In terms of biological role, positive regulator of mTOR signaling that functions by triggering the degradation of DEPTOR, an mTOR inhibitor. Involved in the dynamic regulation of mTOR signaling in chondrocyte differentiation during skeletogenesis. Negatively regulates cAMP signaling pathway possibly by acting on CRTC2/TORC2 and CRTC3/TORC3. Prevents HDAC4 translocation to the nucleus. This is Serine/threonine-protein kinase SIK3 from Homo sapiens (Human).